The primary structure comprises 653 residues: Chaperone protein HtpG (653 aa).

The interval 1–361 (MSETNQVQNH…SNDLPLNVSR (361 aa)) is a; substrate-binding. The interval 362-578 (EILQDNKVTQ…DDDMSSQMAK (217 aa)) is b. A c region spans residues 579 to 653 (LMASVGQEVP…LNKLMLSLTK (75 aa)).

Belongs to the heat shock protein 90 family. Homodimer.

Its subcellular location is the cytoplasm. Functionally, molecular chaperone. Has ATPase activity. The protein is Chaperone protein HtpG of Colwellia psychrerythraea (strain 34H / ATCC BAA-681) (Vibrio psychroerythus).